A 193-amino-acid chain; its full sequence is Protein THEM6 (193 aa).

The first 18 residues, 1–18 (MSWLVVLLILYVIWDVNY), serve as a signal peptide directing secretion. Residue Asn-149 is glycosylated (N-linked (GlcNAc...) asparagine).

It belongs to the THEM6 family.

It is found in the secreted. The polypeptide is Protein THEM6 (Drosophila melanogaster (Fruit fly)).